Consider the following 347-residue polypeptide: ATP-dependent (S)-NAD(P)H-hydrate dehydratase (347 aa).

One can recognise a YjeF C-terminal domain in the interval 53–344 (TLQLVRNIIP…AEVGAAFSKL (292 aa)). Tyr85 carries the post-translational modification Phosphotyrosine. Residues Gly153 and 206–212 (NHVEFSR) contribute to the (6S)-NADPHX site. Asn240 is a glycosylation site (N-linked (GlcNAc...) asparagine). ATP is bound by residues 246 to 250 (KGERD) and 265 to 274 (GSSRRCGGQG). Asp275 contacts (6S)-NADPHX. The N-linked (GlcNAc...) asparagine glycan is linked to Asn297.

The protein belongs to the NnrD/CARKD family. Mg(2+) serves as cofactor.

The protein resides in the mitochondrion. The enzyme catalyses (6S)-NADHX + ATP = ADP + phosphate + NADH + H(+). It carries out the reaction (6S)-NADPHX + ATP = ADP + phosphate + NADPH + H(+). In terms of biological role, catalyzes the dehydration of the S-form of NAD(P)HX at the expense of ATP, which is converted to ADP. Together with NAD(P)HX epimerase, which catalyzes the epimerization of the S- and R-forms, the enzyme allows the repair of both epimers of NAD(P)HX, a damaged form of NAD(P)H that is a result of enzymatic or heat-dependent hydration. The protein is ATP-dependent (S)-NAD(P)H-hydrate dehydratase of Homo sapiens (Human).